The chain runs to 204 residues: Probable proteasome subunit beta type-3 (204 aa).

The protein belongs to the peptidase T1B family. In terms of assembly, the 26S proteasome consists of a 20S proteasome core and two 19S regulatory subunits. The 20S proteasome core is composed of 28 subunits that are arranged in four stacked rings, resulting in a barrel-shaped structure. The two end rings are each formed by seven alpha subunits, and the two central rings are each formed by seven beta subunits. The catalytic chamber with the active sites is on the inside of the barrel.

It is found in the cytoplasm. The protein localises to the nucleus. Its function is as follows. Non-catalytic component of the proteasome, a multicatalytic proteinase complex which is characterized by its ability to cleave peptides with Arg, Phe, Tyr, Leu, and Glu adjacent to the leaving group at neutral or slightly basic pH. The proteasome has an ATP-dependent proteolytic activity. This chain is Probable proteasome subunit beta type-3 (pup3), found in Schizosaccharomyces pombe (strain 972 / ATCC 24843) (Fission yeast).